The following is a 146-amino-acid chain: Large ribosomal subunit protein uL15 (146 aa).

Over residues 1-13 the composition is skewed to basic and acidic residues; it reads MKLHELKPAEGSR. The tract at residues 1–52 is disordered; the sequence is MKLHELKPAEGSRKVRNRVGRGIGSGNGKTAGKGHKGQNARSGGGVRLGFEG. 2 stretches are compositionally biased toward gly residues: residues 21 to 31 and 42 to 52; these read RGIGSGNGKTA and SGGGVRLGFEG.

Belongs to the universal ribosomal protein uL15 family. In terms of assembly, part of the 50S ribosomal subunit.

In terms of biological role, binds to the 23S rRNA. This chain is Large ribosomal subunit protein uL15, found in Bacillus anthracis (strain A0248).